Reading from the N-terminus, the 134-residue chain is B3 domain-containing protein At1g16640 (134 aa).

A DNA-binding region (TF-B3) is located at residues 7-100; that stretch reads VQFMKPFISE…TFYVIIYGHN (94 aa).

The protein localises to the nucleus. This Arabidopsis thaliana (Mouse-ear cress) protein is B3 domain-containing protein At1g16640.